A 1135-amino-acid polypeptide reads, in one-letter code: DNA-directed RNA polymerase I subunit RPA2 (1135 aa).

Residues 1-26 (MDVDGRWRNLPSGPSLKHLTDPSYGI) are disordered. Arginine 180 lines the RNA pocket. The interval 194–208 (VRPKWKSRGLGYTQF) is loop B. The tract at residues 236–247 (LNFIYRKELFFL) is loop A. Aspartate 367 is a binding site for RNA. Fork loop regions lie at residues 439–453 (LRSK…DSGL) and 474–489 (RGAA…VRRL). Aspartate 755 contacts Mg(2+). Lysine 890 is an RNA binding site. DNA-binding residues include lysine 1020 and arginine 1036. At serine 1051 the chain carries Phosphoserine. The Zn(2+) site is built by cysteine 1070, cysteine 1073, cysteine 1098, and cysteine 1101. A C4-type zinc finger spans residues 1070 to 1101 (CVECGSLLSPLLEKPPPSWSAMRNRKYNCTVC).

It belongs to the RNA polymerase beta chain family. Component of the RNA polymerase I (Pol I) complex consisting of 13 subunits: a ten-subunit catalytic core composed of POLR1A/RPA1, POLR1B/RPA2, POLR1C/RPAC1, POLR1D/RPAC2, POLR1H/RPA12, POLR2E/RPABC1, POLR2F/RPABC2, POLR2H/RPABC3, POLR2K/RPABC4 and POLR2L/RPABC5; a mobile stalk subunit POLR1F/RPA43 protruding from the core and additional subunits homologous to general transcription factors POLR1E/RPA49 and POLR1G/RPA34. Part of Pol I pre-initiation complex (PIC), in which Pol I core assembles with RRN3 and promoter-bound UTBF and SL1/TIF-IB complex. Mg(2+) is required as a cofactor.

Its subcellular location is the nucleus. It localises to the nucleolus. It is found in the chromosome. The catalysed reaction is RNA(n) + a ribonucleoside 5'-triphosphate = RNA(n+1) + diphosphate. Its function is as follows. Catalytic core component of RNA polymerase I (Pol I), a DNA-dependent RNA polymerase which synthesizes ribosomal RNA precursors using the four ribonucleoside triphosphates as substrates. Transcribes 47S pre-rRNAs from multicopy rRNA gene clusters, giving rise to 5.8S, 18S and 28S ribosomal RNAs. Pol I-mediated transcription cycle proceeds through transcription initiation, transcription elongation and transcription termination stages. During transcription initiation, Pol I pre-initiation complex (PIC) is recruited by the selectivity factor 1 (SL1/TIF-IB) complex bound to the core promoter that precedes an rDNA repeat unit. The PIC assembly bends the promoter favoring the formation of the transcription bubble and promoter escape. Once the polymerase has escaped from the promoter it enters the elongation phase during which RNA is actively polymerized, based on complementarity with the template DNA strand. Highly processive, assembles in structures referred to as 'Miller trees' where many elongating Pol I complexes queue and transcribe the same rDNA coding regions. At terminator sequences downstream of the rDNA gene, PTRF interacts with Pol I and halts Pol I transcription leading to the release of the RNA transcript and polymerase from the DNA. Forms Pol I active center together with the largest subunit POLR1A/RPA1. Appends one nucleotide at a time to the 3' end of the nascent RNA, with POLR1A/RPA1 contributing a Mg(2+)-coordinating DxDGD motif, and POLR1B/RPA2 participating in the coordination of a second Mg(2+) ion and providing lysine residues believed to facilitate Watson-Crick base pairing between the incoming nucleotide and the template base. Typically, Mg(2+) ions direct a 5' nucleoside triphosphate to form a phosphodiester bond with the 3' hydroxyl of the preceding nucleotide of the nascent RNA, with the elimination of pyrophosphate. Has proofreading activity: Pauses and backtracks to allow the cleavage of a missincorporated nucleotide via POLR1H/RPA12. High Pol I processivity is associated with decreased transcription fidelity. The chain is DNA-directed RNA polymerase I subunit RPA2 from Mus musculus (Mouse).